We begin with the raw amino-acid sequence, 228 residues long: Cytidylate kinase (228 aa).

Position 11 to 19 (11 to 19 (GPAGTGKSS)) interacts with ATP.

Belongs to the cytidylate kinase family. Type 1 subfamily.

Its subcellular location is the cytoplasm. The enzyme catalyses CMP + ATP = CDP + ADP. The catalysed reaction is dCMP + ATP = dCDP + ADP. The polypeptide is Cytidylate kinase (Mycolicibacterium paratuberculosis (strain ATCC BAA-968 / K-10) (Mycobacterium paratuberculosis)).